A 259-amino-acid chain; its full sequence is Hemin import ATP-binding protein HmuV (259 aa).

In terms of domain architecture, ABC transporter spans 8-242 (ISANNISYRI…KMIENVYGHK (235 aa)). Position 40–47 (40–47 (GPNGAGKS)) interacts with ATP.

The protein belongs to the ABC transporter superfamily. Heme (hemin) importer (TC 3.A.1.14.5) family. In terms of assembly, the complex is composed of two ATP-binding proteins (HmuV), two transmembrane proteins (HmuU) and a solute-binding protein (HmuT).

Its subcellular location is the cell inner membrane. Part of the ABC transporter complex HmuTUV involved in hemin import. Responsible for energy coupling to the transport system. The chain is Hemin import ATP-binding protein HmuV from Aliivibrio fischeri (strain ATCC 700601 / ES114) (Vibrio fischeri).